Here is a 349-residue protein sequence, read N- to C-terminus: Aquaporin-4 (349 aa).

2 helical membrane passes run 92 to 112 and 125 to 147; these read LSES…AATA and AFYH…GGLL. The short motif at 148 to 150 is the NPA 1 element; the sequence is NPA. The helical transmembrane segment at 167–187 threads the bilayer; the sequence is LIYMSAQYFGAFIASAVVYLI. Residues asparagine 194 and asparagine 207 are each glycosylated (N-linked (GlcNAc...) asparagine). Transmembrane regions (helical) follow at residues 225-245 and 256-276; these read GAIF…LSIC and MFPF…SYSA. The short motif at 281 to 283 is the NPA 2 element; that stretch reads NPA. A helical transmembrane segment spans residues 314-334; it reads WLFPYVGALLGGVIYEIFIGI.

The protein belongs to the MIP/aquaporin (TC 1.A.8) family.

It localises to the cell membrane. Its function is as follows. Aquaglyceroporin that may modulate the water content and osmolytes during anhydrobiosis. This chain is Aquaporin-4, found in Milnesium tardigradum (Water bear).